Here is a 271-residue protein sequence, read N- to C-terminus: 3-methyl-2-oxobutanoate hydroxymethyltransferase (271 aa).

The Mg(2+) site is built by D49 and D88. 3-methyl-2-oxobutanoate-binding positions include 49–50 (DS), D88, and K118. Residue E120 participates in Mg(2+) binding. E187 serves as the catalytic Proton acceptor.

Belongs to the PanB family. Homodecamer; pentamer of dimers. Mg(2+) is required as a cofactor.

It is found in the cytoplasm. The enzyme catalyses 3-methyl-2-oxobutanoate + (6R)-5,10-methylene-5,6,7,8-tetrahydrofolate + H2O = 2-dehydropantoate + (6S)-5,6,7,8-tetrahydrofolate. It participates in cofactor biosynthesis; (R)-pantothenate biosynthesis; (R)-pantoate from 3-methyl-2-oxobutanoate: step 1/2. Functionally, catalyzes the reversible reaction in which hydroxymethyl group from 5,10-methylenetetrahydrofolate is transferred onto alpha-ketoisovalerate to form ketopantoate. This chain is 3-methyl-2-oxobutanoate hydroxymethyltransferase, found in Bartonella bacilliformis (strain ATCC 35685 / KC583 / Herrer 020/F12,63).